Here is a 285-residue protein sequence, read N- to C-terminus: Tropomyosin alpha-3 chain (285 aa).

Positions 1-285 (MMEAIKKKMQ…DHALNDMTSI (285 aa)) form a coiled coil. At Met2 the chain carries N-acetylmethionine. Met2 bears the N-acetylalanine mark. The residue at position 54 (Thr54) is a Phosphothreonine. 2 positions are modified to phosphoserine: Ser62 and Ser88. Thr109 carries the phosphothreonine modification. Ser207 and Ser216 each carry phosphoserine. Ile228 carries the post-translational modification N6-acetyllysine. Thr253 bears the Phosphothreonine mark. Position 262 is a phosphotyrosine (Tyr262). Ser272 bears the Phosphoserine mark. Residue Thr283 is modified to Phosphothreonine. Ser284 carries the phosphoserine modification.

It belongs to the tropomyosin family. In terms of assembly, homodimer. Heterodimer of an alpha (TPM1, TPM3 or TPM4) and a beta (TPM2) chain. Interacts with TMOD1. Interacts with TNNT1.

It is found in the cytoplasm. It localises to the cytoskeleton. Binds to actin filaments in muscle and non-muscle cells. Plays a central role, in association with the troponin complex, in the calcium dependent regulation of vertebrate striated muscle contraction. Smooth muscle contraction is regulated by interaction with caldesmon. In non-muscle cells is implicated in stabilizing cytoskeleton actin filaments. The protein is Tropomyosin alpha-3 chain (Tpm3) of Mus musculus (Mouse).